Consider the following 214-residue polypeptide: ATP phosphoribosyltransferase (214 aa).

This sequence belongs to the ATP phosphoribosyltransferase family. Short subfamily. As to quaternary structure, heteromultimer composed of HisG and HisZ subunits.

The protein localises to the cytoplasm. It carries out the reaction 1-(5-phospho-beta-D-ribosyl)-ATP + diphosphate = 5-phospho-alpha-D-ribose 1-diphosphate + ATP. It participates in amino-acid biosynthesis; L-histidine biosynthesis; L-histidine from 5-phospho-alpha-D-ribose 1-diphosphate: step 1/9. Functionally, catalyzes the condensation of ATP and 5-phosphoribose 1-diphosphate to form N'-(5'-phosphoribosyl)-ATP (PR-ATP). Has a crucial role in the pathway because the rate of histidine biosynthesis seems to be controlled primarily by regulation of HisG enzymatic activity. This is ATP phosphoribosyltransferase from Alcanivorax borkumensis (strain ATCC 700651 / DSM 11573 / NCIMB 13689 / SK2).